A 332-amino-acid chain; its full sequence is Ketol-acid reductoisomerase (NADP(+)) (332 aa).

Positions 2-182 (AKVYHDTEVS…GATRAGVLET (181 aa)) constitute a KARI N-terminal Rossmann domain. Residues 25–28 (YGSQ), Arg-48, Ser-53, and 83–86 (DTEQ) contribute to the NADP(+) site. The active site involves His-108. Residue Gly-134 coordinates NADP(+). The KARI C-terminal knotted domain occupies 183 to 328 (TFKEETETDL…KVLREMMPWL (146 aa)). Mg(2+) is bound by residues Asp-191, Glu-195, Glu-227, and Glu-231. A substrate-binding site is contributed by Ser-252.

The protein belongs to the ketol-acid reductoisomerase family. Mg(2+) is required as a cofactor.

The enzyme catalyses (2R)-2,3-dihydroxy-3-methylbutanoate + NADP(+) = (2S)-2-acetolactate + NADPH + H(+). It catalyses the reaction (2R,3R)-2,3-dihydroxy-3-methylpentanoate + NADP(+) = (S)-2-ethyl-2-hydroxy-3-oxobutanoate + NADPH + H(+). The protein operates within amino-acid biosynthesis; L-isoleucine biosynthesis; L-isoleucine from 2-oxobutanoate: step 2/4. Its pathway is amino-acid biosynthesis; L-valine biosynthesis; L-valine from pyruvate: step 2/4. Its function is as follows. Involved in the biosynthesis of branched-chain amino acids (BCAA). Catalyzes an alkyl-migration followed by a ketol-acid reduction of (S)-2-acetolactate (S2AL) to yield (R)-2,3-dihydroxy-isovalerate. In the isomerase reaction, S2AL is rearranged via a Mg-dependent methyl migration to produce 3-hydroxy-3-methyl-2-ketobutyrate (HMKB). In the reductase reaction, this 2-ketoacid undergoes a metal-dependent reduction by NADPH to yield (R)-2,3-dihydroxy-isovalerate. This chain is Ketol-acid reductoisomerase (NADP(+)), found in Dictyoglomus turgidum (strain DSM 6724 / Z-1310).